We begin with the raw amino-acid sequence, 699 residues long: Elongation factor G (699 aa).

Positions 8-288 constitute a tr-type G domain; the sequence is EDYRNFGIMA…AVVDYLPSPL (281 aa). Residues 17–24, 86–90, and 140–143 each bind GTP; these read AHIDAGKT, DTPGH, and NKMD.

This sequence belongs to the TRAFAC class translation factor GTPase superfamily. Classic translation factor GTPase family. EF-G/EF-2 subfamily.

Its subcellular location is the cytoplasm. In terms of biological role, catalyzes the GTP-dependent ribosomal translocation step during translation elongation. During this step, the ribosome changes from the pre-translocational (PRE) to the post-translocational (POST) state as the newly formed A-site-bound peptidyl-tRNA and P-site-bound deacylated tRNA move to the P and E sites, respectively. Catalyzes the coordinated movement of the two tRNA molecules, the mRNA and conformational changes in the ribosome. In Rhizobium etli (strain ATCC 51251 / DSM 11541 / JCM 21823 / NBRC 15573 / CFN 42), this protein is Elongation factor G.